Consider the following 397-residue polypeptide: Formate-dependent phosphoribosylglycinamide formyltransferase (397 aa).

N(1)-(5-phospho-beta-D-ribosyl)glycinamide is bound by residues 21–22 and Glu81; that span reads EL. Residues Arg113, Lys154, 194 to 197, and Glu202 each bind ATP; that span reads EEFV. Residues 118–312 enclose the ATP-grasp domain; the sequence is RFAAEKLKLP…EFQIHVRSAI (195 aa). Glu271 and Glu283 together coordinate Mg(2+). Residues Asp290, Lys361, and 368-369 contribute to the N(1)-(5-phospho-beta-D-ribosyl)glycinamide site; that span reads RR.

Belongs to the PurK/PurT family. In terms of assembly, homodimer.

The enzyme catalyses N(1)-(5-phospho-beta-D-ribosyl)glycinamide + formate + ATP = N(2)-formyl-N(1)-(5-phospho-beta-D-ribosyl)glycinamide + ADP + phosphate + H(+). It participates in purine metabolism; IMP biosynthesis via de novo pathway; N(2)-formyl-N(1)-(5-phospho-D-ribosyl)glycinamide from N(1)-(5-phospho-D-ribosyl)glycinamide (formate route): step 1/1. Involved in the de novo purine biosynthesis. Catalyzes the transfer of formate to 5-phospho-ribosyl-glycinamide (GAR), producing 5-phospho-ribosyl-N-formylglycinamide (FGAR). Formate is provided by PurU via hydrolysis of 10-formyl-tetrahydrofolate. In Saccharolobus solfataricus (strain ATCC 35092 / DSM 1617 / JCM 11322 / P2) (Sulfolobus solfataricus), this protein is Formate-dependent phosphoribosylglycinamide formyltransferase.